Consider the following 132-residue polypeptide: Interleukin-13 (132 aa).

An N-terminal signal peptide occupies residues 1-18; sequence MALLLTMVIALTCLGGFA. 4 N-linked (GlcNAc...) asparagine glycosylation sites follow: asparagine 38, asparagine 49, asparagine 57, and asparagine 72. Cystine bridges form between cysteine 48-cysteine 76 and cysteine 64-cysteine 90.

This sequence belongs to the IL-4/IL-13 family. In terms of assembly, interacts with IL13RA2.

It localises to the secreted. In terms of biological role, cytokine that plays important roles in allergic inflammation and immune response to parasite infection. Synergizes with IL2 in regulating interferon-gamma synthesis. Stimulates B-cell proliferation, and activation of eosinophils, basophils, and mast cells. Plays an important role in controlling IL33 activity by modulating the production of transmembrane and soluble forms of interleukin-1 receptor-like 1/IL1RL1. Displays the capacity to antagonize Th1-driven proinflammatory immune response and downregulates synthesis of many proinflammatory cytokines including IL1, IL6, IL10, IL12 and TNF-alpha through a mechanism that partially involves suppression of NF-kappa-B. Also functions on nonhematopoietic cells, including endothelial cells where it induces vascular cell adhesion protein 1/VCAM1, which is important in the recruitment of eosinophils. Exerts its biological effects through its receptors which comprises the IL4R chain and the IL13RA1 chain, to activate JAK1 and TYK2, leading to the activation of STAT6. Aside from IL13RA1, another receptor IL13RA2 acts as a high affinity decoy for IL13 and mediates internalization and depletion of extracellular IL13. This chain is Interleukin-13 (IL13), found in Macaca thibetana (Pere David's macaque).